The chain runs to 367 residues: Peptide chain release factor 2 (367 aa).

An N5-methylglutamine modification is found at Gln-254.

This sequence belongs to the prokaryotic/mitochondrial release factor family. Methylated by PrmC. Methylation increases the termination efficiency of RF2.

Its subcellular location is the cytoplasm. Peptide chain release factor 2 directs the termination of translation in response to the peptide chain termination codons UGA and UAA. The sequence is that of Peptide chain release factor 2 from Acidovorax ebreus (strain TPSY) (Diaphorobacter sp. (strain TPSY)).